Reading from the N-terminus, the 627-residue chain is Protein fem-1 homolog B (627 aa).

ANK repeat units follow at residues 45-74 (QRST…VQTQ), 87-116 (DGAT…NVNH), 120-149 (TNST…NISI), and 153-182 (YDNT…DPNA). Zn(2+) is bound by residues His185, Cys186, and His218. ANK repeat units lie at residues 186–215 (CGAT…AIVV) and 218–248 (HGMT…DRRS). Residues 344–377 (SHPIIYRGAVYADNMEFEQCIKLWLHALHLRQKG) form a TPR repeat. ANK repeat units follow at residues 483 to 527 (EGFT…EVNA) and 531 to 568 (EGNS…HTDM).

It belongs to the fem-1 family. Component of a CRL2 E3 ubiquitin-protein ligase complex, also named ECS (Elongin BC-CUL2/5-SOCS-box protein) complex, composed of CUL2, Elongin BC (ELOB and ELOC), RBX1 and substrate-specific adapter FEM1B. Homooligomer. Interacts with PPM1F and PHTF1. Interacts with the death domain of FAS/TNFRSF6 and TNFRSF1A. Interacts with CHEK1. Interacts with NKX3-1. In terms of tissue distribution, present in adult testis (at protein level).

The protein localises to the cytoplasm. It localises to the nucleus. It functions in the pathway protein modification; protein ubiquitination. Activity of the CRL2(FEM1B) complex toward FNIP1 is inhibited by BEX family proteins (BEX1, BEX2, BEX3 and/or BEX4) in absence of reductive stress. Mechanistically, BEX proteins act as pseudosubstrate inhibitors that associate with FEM1B via zinc in absence of reductive stress, thereby preventing association between FEM1B and FNIP1. Substrate-recognition component of a Cul2-RING (CRL2) E3 ubiquitin-protein ligase complex of the DesCEND (destruction via C-end degrons) pathway, which recognizes a C-degron located at the extreme C terminus of target proteins, leading to their ubiquitination and degradation. The C-degron recognized by the DesCEND pathway is usually a motif of less than ten residues and can be present in full-length proteins, truncated proteins or proteolytically cleaved forms. The CRL2(FEM1B) complex specifically recognizes proteins ending with -Gly-Leu-Asp-Arg, such as CDK5R1, leading to their ubiquitination and degradation. Also acts as a regulator of the reductive stress response by mediating ubiquitination of reduced FNIP1: in response to reductive stress, the CRL2(FEM1B) complex specifically recognizes a conserved Cys degron in FNIP1 when this degron is reduced, leading to FNIP1 degradation and subsequent activation of mitochondria to recalibrate reactive oxygen species (ROS). Mechanistically, recognizes and binds reduced FNIP1 through two interface zinc ions, which act as a molecular glue that recruit reduced FNIP1 to FEM1B. Promotes ubiquitination of GLI1, suppressing GLI1 transcriptional activator activity. Promotes ubiquitination and degradation of ANKRD37. Promotes ubiquitination and degradation of SLBP. Involved in apoptosis by acting as a death receptor-associated protein that mediates apoptosis. Also involved in glucose homeostasis in pancreatic islet. May also act as an adapter/mediator in replication stress-induced signaling that leads to the activation of CHEK1. This is Protein fem-1 homolog B from Rattus norvegicus (Rat).